A 287-amino-acid chain; its full sequence is ATP synthase gamma chain (287 aa).

This sequence belongs to the ATPase gamma chain family. F-type ATPases have 2 components, CF(1) - the catalytic core - and CF(0) - the membrane proton channel. CF(1) has five subunits: alpha(3), beta(3), gamma(1), delta(1), epsilon(1). CF(0) has three main subunits: a, b and c.

It localises to the cell inner membrane. Functionally, produces ATP from ADP in the presence of a proton gradient across the membrane. The gamma chain is believed to be important in regulating ATPase activity and the flow of protons through the CF(0) complex. This Geobacter metallireducens (strain ATCC 53774 / DSM 7210 / GS-15) protein is ATP synthase gamma chain.